Here is a 664-residue protein sequence, read N- to C-terminus: Macoilin (664 aa).

4 helical membrane-spanning segments follow: residues 28-48 (TFLYLKFLVVWALVLLADFVL), 75-95 (AFSVFFVCVAFTSNIICLLFI), 120-140 (VCLPTVSLWILFVYIEAAIRF), and 154-174 (FAAHCIGYPVVTLGFGFKSYV). Basic and acidic residues predominate over residues 253 to 265 (REKGKEKDKDAKK). A disordered region spans residues 253-274 (REKGKEKDKDAKKHNLGINNNN). S305 carries the post-translational modification Phosphoserine. Positions 320–348 (KNYKNASGVVNSSPRSHSATNGSIPSSSS) are enriched in polar residues. Residues 320 to 375 (KNYKNASGVVNSSPRSHSATNGSIPSSSSKNEKKQKCTSKGPSAHKDLMENCIPNN) form a disordered region. N324 is a glycosylation site (N-linked (GlcNAc...) asparagine). The residue at position 332 (S332) is a Phosphoserine. N340 and N452 each carry an N-linked (GlcNAc...) asparagine glycan. Positions 630-664 (TSPLSPVSPHYSSKFVETSPSGLDPNASVYQPLKK) are disordered. Phosphoserine is present on residues S631 and S634. N655 carries an N-linked (GlcNAc...) asparagine glycan.

Belongs to the macoilin family. In terms of tissue distribution, strong expression in whole nervous system up to 12.5 dpc. Highly expressed in all neuronal differentiation fields from 14.5 dpc to birth, with highest expression in the telencephalic cortical plate and mitral cells in the olfactory bulb, and lower expression in neuronal progenitor zones. Progressively decreased expression in fields of neuron precursor proliferation from 14.5 dpc and virtually undetectable there by 17.5 dpc. No significant expression detected outside the nervous system. After birth, significant expression remains in the cerebellum, olfactory bulb and hippocampus.

Its subcellular location is the rough endoplasmic reticulum membrane. It localises to the nucleus membrane. Plays a role in the regulation of neuronal activity. The sequence is that of Macoilin (Maco1) from Mus musculus (Mouse).